Here is an 81-residue protein sequence, read N- to C-terminus: Large ribosomal subunit protein bL28 (81 aa).

Belongs to the bacterial ribosomal protein bL28 family. Part of the 50S ribosomal subunit.

The sequence is that of Large ribosomal subunit protein bL28 from Deinococcus radiodurans (strain ATCC 13939 / DSM 20539 / JCM 16871 / CCUG 27074 / LMG 4051 / NBRC 15346 / NCIMB 9279 / VKM B-1422 / R1).